The primary structure comprises 382 residues: Anhydro-N-acetylmuramic acid kinase (382 aa).

22–29 provides a ligand contact to ATP; sequence GTSMDGVD.

This sequence belongs to the anhydro-N-acetylmuramic acid kinase family.

It catalyses the reaction 1,6-anhydro-N-acetyl-beta-muramate + ATP + H2O = N-acetyl-D-muramate 6-phosphate + ADP + H(+). Its pathway is amino-sugar metabolism; 1,6-anhydro-N-acetylmuramate degradation. It functions in the pathway cell wall biogenesis; peptidoglycan recycling. Functionally, catalyzes the specific phosphorylation of 1,6-anhydro-N-acetylmuramic acid (anhMurNAc) with the simultaneous cleavage of the 1,6-anhydro ring, generating MurNAc-6-P. Is required for the utilization of anhMurNAc either imported from the medium or derived from its own cell wall murein, and thus plays a role in cell wall recycling. The chain is Anhydro-N-acetylmuramic acid kinase from Burkholderia vietnamiensis (strain G4 / LMG 22486) (Burkholderia cepacia (strain R1808)).